The chain runs to 269 residues: MPLSNNVIGCINFITVLLSIPVIGAGIWLAIGTVNSCVKLLQWPVIILGVLILLVGLAGFIGGFWRITWLLVVYLIAMLILIVLLGCLVGFIYMVTIRGSGHPEPSRAYLEYSLQDFSGWLRRRVQRSYKWERIRTCLSTTTICPELNQRYTLAQDFFNAHLDPIQSGCCKPPTKCGFTFVNPTYWISPIDMSADMDCLNWSNDQNTLCYTCDSCKAGLLANIKVDWLKADIFLLLALIGLIIVYIIGCCAFRNAETEDIFRKYKQGYT.

Residues 1–10 (MPLSNNVIGC) are Cytoplasmic-facing. Residues 11–31 (INFITVLLSIPVIGAGIWLAI) form a helical membrane-spanning segment. Over 32 to 44 (GTVNSCVKLLQWP) the chain is Extracellular. The chain crosses the membrane as a helical span at residues 45-65 (VIILGVLILLVGLAGFIGGFW). Topologically, residues 66-71 (RITWLL) are cytoplasmic. The helical transmembrane segment at 72–92 (VVYLIAMLILIVLLGCLVGFI) threads the bilayer. The Extracellular segment spans residues 93 to 231 (YMVTIRGSGH…NIKVDWLKAD (139 aa)). An N-linked (GlcNAc...) asparagine glycan is attached at Asn-200. A helical transmembrane segment spans residues 232–252 (IFLLLALIGLIIVYIIGCCAF). The Cytoplasmic segment spans residues 253–269 (RNAETEDIFRKYKQGYT).

This sequence belongs to the tetraspanin (TM4SF) family. Expressed in seedlings, roots, leaves, stems, apex, siliques and flowers. Present in ovules, prominently in nucellus and integuments.

The protein resides in the membrane. In terms of biological role, involved in the basipetal transport of auxin (IAA) that modulates growth and organs organization, as well as cell differentiation. Regulates shoot apical meristem (SAM) organization in the peripheral zone. Required for initial meristematic divisions in the epidermal/lateral root cap leading to the formation of epidermal cells and a clone of lateral root cap cells, as well as for the maintenance of the radial pattern of cell specification in the root, thus regulating the distinction between the lateral root cap and epidermis. Together with WIH peptides, promotes megasporogenesis. This Arabidopsis thaliana (Mouse-ear cress) protein is Protein TORNADO 2 (TRN2).